The following is a 733-amino-acid chain: Polyribonucleotide nucleotidyltransferase (733 aa).

The Mg(2+) site is built by D488 and D494. The KH domain maps to 555-614; the sequence is PRIEMMTIPVEKIREVIGSGGKVIREIVEQTGAKINIEDDGTIKIASPDTKSIETAKSWI. The S1 motif domain maps to 624–692; that stretch reads GTIYQGTVVK…ERGKIRLSMK (69 aa). The segment at 698 to 733 is disordered; it reads TGKEIPQDDLIKTEKEQNPDEKNKSEKKRHNRKKED. Residues 702–721 show a composition bias toward basic and acidic residues; the sequence is IPQDDLIKTEKEQNPDEKNK. The segment covering 722-733 has biased composition (basic residues); the sequence is SEKKRHNRKKED.

It belongs to the polyribonucleotide nucleotidyltransferase family. Mg(2+) serves as cofactor.

The protein localises to the cytoplasm. It carries out the reaction RNA(n+1) + phosphate = RNA(n) + a ribonucleoside 5'-diphosphate. Involved in mRNA degradation. Catalyzes the phosphorolysis of single-stranded polyribonucleotides processively in the 3'- to 5'-direction. In Bartonella bacilliformis (strain ATCC 35685 / KC583 / Herrer 020/F12,63), this protein is Polyribonucleotide nucleotidyltransferase.